Reading from the N-terminus, the 135-residue chain is UPF0355 protein MRSA252 (135 aa).

Belongs to the UPF0355 family.

The sequence is that of UPF0355 protein MRSA252 from Staphylococcus aureus (strain MRSA252).